A 229-amino-acid polypeptide reads, in one-letter code: Potassium/proton antiporter CemA (229 aa).

Transmembrane regions (helical) follow at residues 6–26 (AFIP…ISLC), 107–127 (IFHF…SFWG), 152–172 (FLIL…GWEL), and 189–209 (ILSG…KYWI).

This sequence belongs to the CemA family.

The protein localises to the plastid. It localises to the chloroplast inner membrane. The enzyme catalyses K(+)(in) + H(+)(out) = K(+)(out) + H(+)(in). In terms of biological role, contributes to K(+)/H(+) antiport activity by supporting proton efflux to control proton extrusion and homeostasis in chloroplasts in a light-dependent manner to modulate photosynthesis. Prevents excessive induction of non-photochemical quenching (NPQ) under continuous-light conditions. Indirectly promotes efficient inorganic carbon uptake into chloroplasts. This chain is Potassium/proton antiporter CemA, found in Aethionema grandiflorum (Persian stone-cress).